A 142-amino-acid polypeptide reads, in one-letter code: ATP synthase epsilon chain (142 aa).

The protein belongs to the ATPase epsilon chain family. F-type ATPases have 2 components, CF(1) - the catalytic core - and CF(0) - the membrane proton channel. CF(1) has five subunits: alpha(3), beta(3), gamma(1), delta(1), epsilon(1). CF(0) has three main subunits: a, b and c.

It localises to the cell inner membrane. Functionally, produces ATP from ADP in the presence of a proton gradient across the membrane. This chain is ATP synthase epsilon chain, found in Mannheimia succiniciproducens (strain KCTC 0769BP / MBEL55E).